We begin with the raw amino-acid sequence, 165 residues long: Cysteine and tyrosine-rich protein 1 (165 aa).

An N-terminal signal peptide occupies residues methionine 1–alanine 29. Over glutamine 30–threonine 61 the chain is Extracellular. The chain crosses the membrane as a helical span at residues alanine 62–isoleucine 82. Over cysteine 83–asparagine 165 the chain is Cytoplasmic. Positions aspartate 127 to asparagine 165 are disordered. Polar residues predominate over residues arginine 153 to asparagine 165.

This sequence belongs to the CYYR1 family.

Its subcellular location is the membrane. This Rattus norvegicus (Rat) protein is Cysteine and tyrosine-rich protein 1 (Cyyr1).